Here is a 717-residue protein sequence, read N- to C-terminus: Scinderin (717 aa).

An actin-severing region spans residues M1 to E363. The stretch at E28–V108 is one Gelsolin-like 1 repeat. A 1,2-diacyl-sn-glycero-3-phospho-(1D-myo-inositol-4,5-bisphosphate) contacts are provided by residues K112 to A119 and R138 to R146. Gelsolin-like repeat units lie at residues V148 to L220, V265 to F340, R408 to L483, A526 to W590, and I628 to F703. Residues R364–W715 form a ca(2+)-dependent actin binding region. Residues N538, D539, E562, D643, D644, and E666 each contribute to the Ca(2+) site.

Belongs to the villin/gelsolin family.

It is found in the cytoplasm. The protein localises to the cytoskeleton. The protein resides in the cell projection. It localises to the podosome. Its function is as follows. Ca(2+)-dependent actin filament-severing protein that has a regulatory function in exocytosis by affecting the organization of the microfilament network underneath the plasma membrane. In vitro, also has barbed end capping and nucleating activities in the presence of Ca(2+). Severing activity is inhibited by phosphatidylinositol 4,5-bis-phosphate (PIP2). Required for megakaryocyte differentiation, maturation, polyploidization and apoptosis with the release of platelet-like particles. Plays a role in osteoclastogenesis (OCG) and actin cytoskeletal organization in osteoclasts. Regulates chondrocyte proliferation and differentiation. Inhibits cell proliferation and tumorigenesis. Signaling is mediated by MAPK, p38 and JNK pathways. The sequence is that of Scinderin (SCIN) from Gallus gallus (Chicken).